Here is a 686-residue protein sequence, read N- to C-terminus: Amphiphysin (686 aa).

Coiled coils occupy residues 10 to 83 (AKNV…SLHE) and 144 to 191 (DYDS…QEEL). In terms of domain architecture, BAR spans 24–240 (VLQKLGKADE…MTKLGDQHAD (217 aa)). Disordered stretches follow at residues 244–314 (SIQG…PTKE), 421–441 (AETEQALPTEPQAEEPPATAA), and 483–597 (VEEA…AGAV). Ser-252 carries the phosphoserine modification. At Thr-260 the chain carries Phosphothreonine. Over residues 261–274 (PSPPEEPSPLPSPT) the composition is skewed to pro residues. Phosphoserine is present on residues Ser-262, Ser-268, Ser-272, and Ser-276. Residue Thr-280 is modified to Phosphothreonine. Low complexity predominate over residues 424–441 (EQALPTEPQAEEPPATAA). Ser-500 bears the Phosphoserine mark. The segment covering 541-562 (SNHEGEGEHQETATGTEPREAA) has biased composition (basic and acidic residues). Positions 613–686 (GFLYKVETLH…FPENFTRRLE (74 aa)) constitute an SH3 domain. Ser-629 is subject to Phosphoserine.

Heterodimer with BIN1. Binds SH3GLB1. Interacts with REPS1 and SGIP1. Binds AP2A2. Interacts with AP2B1. Interacts with DNM1 and SYNJ1.

It localises to the cytoplasmic vesicle. The protein localises to the secretory vesicle. It is found in the synaptic vesicle membrane. The protein resides in the cytoplasm. Its subcellular location is the cytoskeleton. In terms of biological role, may participate in mechanisms of regulated exocytosis in synapses and certain endocrine cell types. May control the properties of the membrane associated cytoskeleton. The polypeptide is Amphiphysin (Amph) (Mus musculus (Mouse)).